The following is a 340-amino-acid chain: Heat-inducible transcription repressor HrcA (340 aa).

Belongs to the HrcA family.

Its function is as follows. Negative regulator of class I heat shock genes (grpE-dnaK-dnaJ and groELS operons). Prevents heat-shock induction of these operons. This is Heat-inducible transcription repressor HrcA from Burkholderia cenocepacia (strain ATCC BAA-245 / DSM 16553 / LMG 16656 / NCTC 13227 / J2315 / CF5610) (Burkholderia cepacia (strain J2315)).